The primary structure comprises 154 residues: S-ribosylhomocysteine lyase (154 aa).

Fe cation-binding residues include histidine 57, histidine 61, and cysteine 124.

The protein belongs to the LuxS family. Homodimer. The cofactor is Fe cation.

It carries out the reaction S-(5-deoxy-D-ribos-5-yl)-L-homocysteine = (S)-4,5-dihydroxypentane-2,3-dione + L-homocysteine. In terms of biological role, involved in the synthesis of autoinducer 2 (AI-2) which is secreted by bacteria and is used to communicate both the cell density and the metabolic potential of the environment. The regulation of gene expression in response to changes in cell density is called quorum sensing. Catalyzes the transformation of S-ribosylhomocysteine (RHC) to homocysteine (HC) and 4,5-dihydroxy-2,3-pentadione (DPD). This is S-ribosylhomocysteine lyase from Exiguobacterium sibiricum (strain DSM 17290 / CCUG 55495 / CIP 109462 / JCM 13490 / 255-15).